Here is a 447-residue protein sequence, read N- to C-terminus: ATP-dependent protease ATPase subunit HslU (447 aa).

Residues I17, 59 to 64 (GVGKTE), D256, E321, and R393 contribute to the ATP site.

This sequence belongs to the ClpX chaperone family. HslU subfamily. A double ring-shaped homohexamer of HslV is capped on each side by a ring-shaped HslU homohexamer. The assembly of the HslU/HslV complex is dependent on binding of ATP.

It localises to the cytoplasm. Its function is as follows. ATPase subunit of a proteasome-like degradation complex; this subunit has chaperone activity. The binding of ATP and its subsequent hydrolysis by HslU are essential for unfolding of protein substrates subsequently hydrolyzed by HslV. HslU recognizes the N-terminal part of its protein substrates and unfolds these before they are guided to HslV for hydrolysis. The chain is ATP-dependent protease ATPase subunit HslU from Pseudomonas putida (strain W619).